The following is an 813-amino-acid chain: MRRALRLLPLPLSIAICLPAMAADKPFNWGLCPTVDPLPGFDGAPAADPKAAEMRQQLPTDIEGDQLSGTSTTPQYQGNVALKRGDQFLGADNLRMDTETGNYIAEGNVRYQDTSFRMVADRAEGNQDTDTHKVTNIRYQLVERRGNGDAESVDLQGQVGQMHRSTYTTCDPSQPIWRVRAPEIDVDNGEGFGTARNAVLQIGNVPVLYFPWFKFPIDDRRQTGLLFPQFGLSRRNGFDYLQPIYLNLAPNYDATLLPRYMSKRGFMFGTEFRYLYEGGRGEVTGNYLPNDKLRDKDRGSVFYSGYHNVNSNWQARSSISWVSDTRYVEDFTSRLNGMGSTSSLQSTVGIYGTGETWTAGLMAERWQLTDYTLDERSLPYNRQPRAYFNWEKPFGIFEAGVYAEAVRFTHDDSYFVQPPSPSVPGEANNRDNNDKYVRTNIRNQEYGSGSRLDLKPYVSMPLSGAAWFFTPTLAWRYTAYQLDSTLAKTGPLTGDRSPSRSLPIASVDAGLYFDRETSLLGTNYLNTLEPRMYYLYVPYRDQDDLPVFDTRPFTFSYGQLFRDTRYTGADRQNDANQLTLAVTSRWLRQDDGREKLSLSAGQILYFSDSRVTINNSTNAVAGSEQTIDQGKSAWVVDANYMINDRWSMGATYQWNPNSRKEDLASLRTRYLLDNDGIINLAYRYRRNLIDNSDQLKQADFSFLYPINPSWSAVGRYYYSLQDRKPLEIIGGVQWDSCCLAVRGLVRRFVRNRDGQMDNSIQIEFVLKGLSSFGQNTDRTLRRAILGYYRDDLYLVPPSNTTTNPDDYDPNLIP.

The signal sequence occupies residues 1 to 22 (MRRALRLLPLPLSIAICLPAMA).

This sequence belongs to the LptD family. Component of the lipopolysaccharide transport and assembly complex. Interacts with LptE and LptA.

It localises to the cell outer membrane. Functionally, together with LptE, is involved in the assembly of lipopolysaccharide (LPS) at the surface of the outer membrane. This chain is LPS-assembly protein LptD, found in Xanthomonas oryzae pv. oryzae (strain MAFF 311018).